A 126-amino-acid polypeptide reads, in one-letter code: Fluoride-specific ion channel FluC (126 aa).

4 consecutive transmembrane segments (helical) span residues 2-22 (LITV…RYLI), 37-57 (VGVL…VVLA), 65-85 (LSPF…AFSL), and 99-119 (AALY…LGMM). Na(+) is bound by residues Gly-75 and Thr-78.

The protein belongs to the fluoride channel Fluc/FEX (TC 1.A.43) family.

The protein resides in the cell inner membrane. It carries out the reaction fluoride(in) = fluoride(out). Its activity is regulated as follows. Na(+) is not transported, but it plays an essential structural role and its presence is essential for fluoride channel function. Fluoride-specific ion channel. Important for reducing fluoride concentration in the cell, thus reducing its toxicity. This chain is Fluoride-specific ion channel FluC, found in Ruegeria sp. (strain TM1040) (Silicibacter sp.).